Here is a 704-residue protein sequence, read N- to C-terminus: Translational regulator orb2 (704 aa).

Residues 1-64 (MDSLKLPKAN…PPGLGSSTPI (64 aa)) form a disordered region. Residues 1-87 (MDSLKLPKAN…ILQSFHHSKH (87 aa)) are gln/His-rich. A compositionally biased stretch (low complexity) spans 9–42 (ANSATSSASGSNSNLSGSTSASASAATSPTSSGT). A phosphoserine mark is found at Ser74, Ser88, and Ser100. Disordered regions lie at residues 82–106 (FHHSKHSPSGGASGGGDASPTSNLL), 166–266 (LPNL…GVSP), and 417–438 (SPSRLSPHSPHSPIQGGNGGNV). The segment at 163–240 (CGGLPNLNLN…PSSPGGGGGG (78 aa)) is gln/His-rich. Composition is skewed to low complexity over residues 176–205 (QLHQQQHQQQHQQHQQHQQQQQLHQHQQQL), 218–233 (QQQQLRESGGSHSPSS), and 417–429 (SPSRLSPHSPHSP). Phosphoserine is present on residues Ser425 and Ser428. RRM domains lie at 447 to 538 (RKVF…PWRL) and 555 to 637 (KTVF…PYVL).

In terms of assembly, monomer. Upon neuronal stimulation, forms stable amyloid-like oligomers composed of isoform A and isoform B which are required for formation of persistent long-term memory. Isoform A is critical for oligomer formation. Phe-5 of isoform A is required for amyloid-like oligomerization. Rapidly forms amyloids and toxic intermediates are extremely transient. Unlike in the adult nervous system, remains monomeric in the early embryo. Interacts with the translational regulator bol. Interacts with Tob; the interaction is enhanced by neuronal stimulation, stabilizes isoform A and induces oligomerization. In terms of processing, phosphorylation regulates interaction with Tob and oligomerization. Protein phosphatase 2A keeps both Orb2 and Tob in an unphosphorylated form. Following synaptic activation, unphosphorylated Orb2 is bound and stabilized by unphosphorylated Tob. Tob recruits activated LimK which phosphorylates both Orb2 and Tob and enhances Orb2 oligomerization. As to expression, broadly expressed throughout the nervous system of embryo, larva and adult including the ventral nerve cord and brain (at protein level). In early embryos, deposited maternally and distributed uniformly throughout the embryo until the extended germband stage. By mid-embryogenesis, highest levels are found in the central and peripheral nervous systems with lower expression also detected in the ectoderm and mesoderm. In adults, high levels are present in the head and body of both sexes with higher expression in testis than ovary. In the ovary, expressed in both germ and follicle cells. In adult head, predominantly neuronal with broad expression throughout the brain and ventral ganglia including the mushroom body.

The protein resides in the perikaryon. The protein localises to the cell projection. It localises to the axon. It is found in the dendrite. Its subcellular location is the synapse. The protein resides in the cytoplasm. The protein localises to the perinuclear region. Its function is as follows. RNA-binding protein involved in translational regulation and required for long-term memory. Required in mushroom body gamma neurons for long-term memory in male courtship. Binds to mRNA 3'-UTRs. In its monomeric form, acts as a translational repressor of genes involved in neuronal growth, synapse formation and protein turnover. In its amyloid-like oligomeric form, acts as a translational activator. The monomeric form reduces poly(A) tail length and destabilizes mRNA while the oligomeric form protects and elongates the poly(A) tail and stabilizes mRNA. Involved in asymmetric cell division in the central nervous system. Plays a role in synapse formation and morphology at neuromuscular junctions by modulating the translation of the tumor suppressor brat. Required for the progression of spermatogenesis through meiosis and for sperm differentiation. During sperm differentiation, required to asymmetrically localize and activate the translation of protein kinase aPKC mRNAs which is necessary for spermatid cyst polarization. Also required during spermatid cyst polarization for localization and translation of its own mRNA. In terms of biological role, required for initial memory acquisition. Following subsequent late dopaminergic pathway activation, recruits isoform B into a complex to activate translation of CaMKII which is required for long-term memory consolidation. This Drosophila melanogaster (Fruit fly) protein is Translational regulator orb2.